We begin with the raw amino-acid sequence, 484 residues long: Protein nucleotidyltransferase YdiU (484 aa).

Glycine 81, glycine 83, arginine 84, lysine 103, aspartate 115, glycine 116, arginine 166, and arginine 173 together coordinate ATP. The active-site Proton acceptor is the aspartate 244. Mg(2+) is bound by residues asparagine 245 and aspartate 254. Residue aspartate 254 coordinates ATP.

This sequence belongs to the SELO family. The cofactor is Mg(2+). It depends on Mn(2+) as a cofactor.

The catalysed reaction is L-seryl-[protein] + ATP = 3-O-(5'-adenylyl)-L-seryl-[protein] + diphosphate. The enzyme catalyses L-threonyl-[protein] + ATP = 3-O-(5'-adenylyl)-L-threonyl-[protein] + diphosphate. It carries out the reaction L-tyrosyl-[protein] + ATP = O-(5'-adenylyl)-L-tyrosyl-[protein] + diphosphate. It catalyses the reaction L-histidyl-[protein] + UTP = N(tele)-(5'-uridylyl)-L-histidyl-[protein] + diphosphate. The catalysed reaction is L-seryl-[protein] + UTP = O-(5'-uridylyl)-L-seryl-[protein] + diphosphate. The enzyme catalyses L-tyrosyl-[protein] + UTP = O-(5'-uridylyl)-L-tyrosyl-[protein] + diphosphate. Its function is as follows. Nucleotidyltransferase involved in the post-translational modification of proteins. It can catalyze the addition of adenosine monophosphate (AMP) or uridine monophosphate (UMP) to a protein, resulting in modifications known as AMPylation and UMPylation. This Shewanella baltica (strain OS185) protein is Protein nucleotidyltransferase YdiU.